Consider the following 282-residue polypeptide: Undecaprenyl-diphosphatase (282 aa).

A run of 7 helical transmembrane segments spans residues 1 to 21, 40 to 60, 85 to 105, 117 to 137, 196 to 216, 229 to 249, and 258 to 278; these read MTLF…FLPV, GAAF…IYFY, AAMG…GLLF, YWVS…EWSV, FSFL…LYHT, AITA…AFLI, and SIFI…IAAG.

It belongs to the UppP family.

It is found in the cell inner membrane. The enzyme catalyses di-trans,octa-cis-undecaprenyl diphosphate + H2O = di-trans,octa-cis-undecaprenyl phosphate + phosphate + H(+). Functionally, catalyzes the dephosphorylation of undecaprenyl diphosphate (UPP). Confers resistance to bacitracin. The protein is Undecaprenyl-diphosphatase of Chlorobium phaeobacteroides (strain DSM 266 / SMG 266 / 2430).